A 415-amino-acid polypeptide reads, in one-letter code: MSEVEEVLKEAYKLVTPTPEEERKVAEVGSRVRQWVSEALAGVAAEVDMYGSSARSTWLPGQRDIDIFVVLRDRSIKPEDVVQTLSRYFDGVGVPWSLRYAQHPYLSLYVEGYEVDVVPCYKIAPGERPITAADRSPLHHKFLSERLSEDQRRDVRLLKLFLKSIGVYGAEIKVEGFSGYLTELLVAYYGSFVDVLKAASGWRPYRTYISFTESKTKFKAPLVVVDPVDPNRNVAAAVSLTSMSTFVLASRRFLKKPSLSYFSPPEAPALGVNAVEVVFPYPGESPDVVWGRYKRLGKSLYKHLRECGFKIYRWGVESDEKTYVSIIYVVEDVELPPYVLHRGPPVYDNAIDAFVEKYLREEVVGPFVLGTRAYVIKRRRYTNIGDCIRAKLGGGYAIRINQYGGGLVRKTPWLT.

Residues S52 and R55 each contribute to the ATP site. CTP is bound by residues S52 and R55. The Mg(2+) site is built by D64, D66, and D116. ATP-binding residues include H139, K159, and Y168. Residues H139, K159, and Y168 each contribute to the CTP site.

Belongs to the tRNA nucleotidyltransferase/poly(A) polymerase family. Archaeal CCA-adding enzyme subfamily. In terms of assembly, homodimer. It depends on Mg(2+) as a cofactor.

It carries out the reaction a tRNA precursor + 2 CTP + ATP = a tRNA with a 3' CCA end + 3 diphosphate. The enzyme catalyses a tRNA with a 3' CCA end + 2 CTP + ATP = a tRNA with a 3' CCACCA end + 3 diphosphate. Catalyzes the addition and repair of the essential 3'-terminal CCA sequence in tRNAs without using a nucleic acid template. Adds these three nucleotides in the order of C, C, and A to the tRNA nucleotide-73, using CTP and ATP as substrates and producing inorganic pyrophosphate. tRNA 3'-terminal CCA addition is required both for tRNA processing and repair. Also involved in tRNA surveillance by mediating tandem CCA addition to generate a CCACCA at the 3' terminus of unstable tRNAs. While stable tRNAs receive only 3'-terminal CCA, unstable tRNAs are marked with CCACCA and rapidly degraded. The chain is CCA-adding enzyme from Pyrobaculum neutrophilum (strain DSM 2338 / JCM 9278 / NBRC 100436 / V24Sta) (Thermoproteus neutrophilus).